We begin with the raw amino-acid sequence, 638 residues long: 2-isopropylmalate synthase (638 aa).

The 275-residue stretch at 72–346 folds into the Pyruvate carboxyltransferase domain; sequence PRWCSVDLRD…DPQLDLSNVP (275 aa). 4 residues coordinate Mg(2+): Asp81, His285, His287, and Asn321. The regulatory domain stretch occupies residues 488–638; sequence VEQSGMTAAG…SAINRSQRQR (151 aa).

This sequence belongs to the alpha-IPM synthase/homocitrate synthase family. LeuA type 2 subfamily. Homodimer. Mg(2+) serves as cofactor.

The protein resides in the cytoplasm. The enzyme catalyses 3-methyl-2-oxobutanoate + acetyl-CoA + H2O = (2S)-2-isopropylmalate + CoA + H(+). It participates in amino-acid biosynthesis; L-leucine biosynthesis; L-leucine from 3-methyl-2-oxobutanoate: step 1/4. Functionally, catalyzes the condensation of the acetyl group of acetyl-CoA with 3-methyl-2-oxobutanoate (2-ketoisovalerate) to form 3-carboxy-3-hydroxy-4-methylpentanoate (2-isopropylmalate). The chain is 2-isopropylmalate synthase from Bifidobacterium longum subsp. infantis (strain ATCC 15697 / DSM 20088 / JCM 1222 / NCTC 11817 / S12).